The chain runs to 252 residues: 5'-nucleotidase SurE (252 aa).

A divalent metal cation contacts are provided by D8, D9, S39, and N91.

It belongs to the SurE nucleotidase family. The cofactor is a divalent metal cation.

The protein resides in the cytoplasm. The catalysed reaction is a ribonucleoside 5'-phosphate + H2O = a ribonucleoside + phosphate. In terms of biological role, nucleotidase that shows phosphatase activity on nucleoside 5'-monophosphates. The polypeptide is 5'-nucleotidase SurE (Bordetella pertussis (strain Tohama I / ATCC BAA-589 / NCTC 13251)).